The chain runs to 240 residues: MAGHSHSANIAHRKNAQDAARGKIFQKLSKEIFVAAQKGFDPEMNSALKLAISKAKAKNMPKDNIERAISKAKGDKNSNSFTETIFNATLSGGVSFIVTTLSDNLNRTRSNMTALFNKQNASLGKTGQIPFVFDHKGIIEFSKGELSEDDLMMVALENGAQEIETTDETFVLISNPEDFSQLKKALEDSFKIEEFLQCEILYLPNTYAEVSEEKQQKLLEFIDKLKDDDDVQDVYHNLDI.

It belongs to the TACO1 family.

The protein resides in the cytoplasm. The protein is Probable transcriptional regulatory protein MS53_0373 of Mycoplasmopsis synoviae (strain 53) (Mycoplasma synoviae).